The sequence spans 172 residues: 3-phenylpropionate/cinnamic acid dioxygenase subunit beta (172 aa).

Belongs to the bacterial ring-hydroxylating dioxygenase beta subunit family. In terms of assembly, this dioxygenase system consists of four proteins: the two subunits of the hydroxylase component (HcaE and HcaF), a ferredoxin (HcaC) and a ferredoxin reductase (HcaD).

The enzyme catalyses 3-phenylpropanoate + NADH + O2 + H(+) = 3-(cis-5,6-dihydroxycyclohexa-1,3-dien-1-yl)propanoate + NAD(+). It catalyses the reaction (E)-cinnamate + NADH + O2 + H(+) = (2E)-3-(cis-5,6-dihydroxycyclohexa-1,3-dien-1-yl)prop-2-enoate + NAD(+). Its pathway is aromatic compound metabolism; 3-phenylpropanoate degradation. Its function is as follows. Part of the multicomponent 3-phenylpropionate dioxygenase. Converts 3-phenylpropionic acid (PP) and cinnamic acid (CI) into 3-phenylpropionate-dihydrodiol (PP-dihydrodiol) and cinnamic acid-dihydrodiol (CI-dihydrodiol), respectively. The polypeptide is 3-phenylpropionate/cinnamic acid dioxygenase subunit beta (Escherichia coli O139:H28 (strain E24377A / ETEC)).